A 257-amino-acid chain; its full sequence is uncharacterized protein (257 aa).

The chain crosses the membrane as a helical span at residues 6–26 (IFWLNLAAIIIISIVVSGDMF).

This sequence belongs to the staphylococcal tandem lipoprotein family.

The protein localises to the cell membrane. This is an uncharacterized protein from Staphylococcus aureus (strain NCTC 8325 / PS 47).